Here is a 1004-residue protein sequence, read N- to C-terminus: Copper-transporting ATPase (1004 aa).

At M1 to T262 the chain is on the cytoplasmic side. HMA domains are found at residues R2–E67 and K80–N146. Positions 13, 16, 91, and 94 each coordinate Cu(+). The chain crosses the membrane as a helical span at residues L263 to V283. The Lumenal, vesicle segment spans residues Q284–D303. Residues I304–A324 traverse the membrane as a helical segment. The Cytoplasmic portion of the chain corresponds to A325 to T335. The helical transmembrane segment at M336–V356 threads the bilayer. Topologically, residues H357–R370 are lumenal, vesicle. Residues I371–T391 form a helical membrane-spanning segment. At L392–S528 the chain is on the cytoplasmic side. Residues I529–L549 form a helical membrane-spanning segment. Topologically, residues N550 to S577 are lumenal, vesicle. The chain crosses the membrane as a helical span at residues V578–G598. The Cytoplasmic segment spans residues T599–N901. D627 (4-aspartylphosphate intermediate) is an active-site residue. Residues D838 and D842 each contribute to the Mg(2+) site. The chain crosses the membrane as a helical span at residues L902 to G924. Residues I925–L927 are Lumenal, vesicle-facing. The helical transmembrane segment at P928–L950 threads the bilayer. The Cytoplasmic portion of the chain corresponds to K951–L1004.

It belongs to the cation transport ATPase (P-type) (TC 3.A.3) family. Type IB subfamily. As to quaternary structure, interacts with the copper chaperone ATX1 via the copper anion.

Its subcellular location is the golgi apparatus. It is found in the trans-Golgi network membrane. The catalysed reaction is Cu(+)(in) + ATP + H2O = Cu(+)(out) + ADP + phosphate + H(+). Copper-transporting P-type ATPase necessary for the proper uptake of iron. Required for export of copper from cytosol into extracytosolic compartment. Retrieves copper from the metallochaperone ATX1 and incorporates it into trans-Golgi vesicles where they are acquired by the cell-surface iron transporter FET3. Required the production of inositolphosphorylceramide D, probably by delivering copper to a yet to be identified enzyme. The polypeptide is Copper-transporting ATPase (Saccharomyces cerevisiae (strain ATCC 204508 / S288c) (Baker's yeast)).